Here is a 377-residue protein sequence, read N- to C-terminus: Histone deacetylase 8 (377 aa).

Residues 5-336 are histone deacetylase; the sequence is RVDVFWHEGM…LHAMLEGVLK (332 aa). The active-site Proton donor/acceptor is His145. Positions 182, 184, and 274 each coordinate Zn(2+).

Belongs to the histone deacetylase family. Requires Zn(2+) as cofactor. As to expression, expressed in stems, leaves, flowers, siliques and mature seeds.

The protein resides in the nucleus. The protein localises to the cytoplasm. The catalysed reaction is N(6)-acetyl-L-lysyl-[histone] + H2O = L-lysyl-[histone] + acetate. In terms of biological role, responsible for the deacetylation of lysine residues on the N-terminal part of the core histones (H2A, H2B, H3 and H4). Histone deacetylation gives a tag for epigenetic repression and plays an important role in transcriptional regulation, cell cycle progression and developmental events. Histone deacetylases act via the formation of large multiprotein complexes. This chain is Histone deacetylase 8, found in Arabidopsis thaliana (Mouse-ear cress).